The chain runs to 203 residues: ATP-dependent Clp protease proteolytic subunit 2 (203 aa).

S101 (nucleophile) is an active-site residue. Residue H126 is part of the active site.

The protein belongs to the peptidase S14 family. As to quaternary structure, fourteen ClpP subunits assemble into 2 heptameric rings which stack back to back to give a disk-like structure with a central cavity, resembling the structure of eukaryotic proteasomes.

The protein localises to the cytoplasm. It carries out the reaction Hydrolysis of proteins to small peptides in the presence of ATP and magnesium. alpha-casein is the usual test substrate. In the absence of ATP, only oligopeptides shorter than five residues are hydrolyzed (such as succinyl-Leu-Tyr-|-NHMec, and Leu-Tyr-Leu-|-Tyr-Trp, in which cleavage of the -Tyr-|-Leu- and -Tyr-|-Trp bonds also occurs).. In terms of biological role, cleaves peptides in various proteins in a process that requires ATP hydrolysis. Has a chymotrypsin-like activity. Plays a major role in the degradation of misfolded proteins. The sequence is that of ATP-dependent Clp protease proteolytic subunit 2 from Prochlorococcus marinus (strain MIT 9312).